Reading from the N-terminus, the 468-residue chain is Chromosomal replication initiator protein DnaA (468 aa).

The domain I, interacts with DnaA modulators stretch occupies residues 1–84 (MSSSLWLQCL…RFEVGSRPVA (84 aa)). The tract at residues 81-104 (RPVAAPKPAPTRTPADVAAESSAP) is disordered. Residues 84 to 131 (AAPKPAPTRTPADVAAESSAPAQLQARKPVHKTWDDDAQAIADINHRS) are domain II. Positions 132-348 (NVNPKHKFNN…GALNRVIANA (217 aa)) are domain III, AAA+ region. Glycine 176, glycine 178, lysine 179, and threonine 180 together coordinate ATP. The domain IV, binds dsDNA stretch occupies residues 349–468 (NFTGRPITID…YSNLIRTLSS (120 aa)).

It belongs to the DnaA family. Oligomerizes as a right-handed, spiral filament on DNA at oriC.

The protein resides in the cytoplasm. Plays an essential role in the initiation and regulation of chromosomal replication. ATP-DnaA binds to the origin of replication (oriC) to initiate formation of the DNA replication initiation complex once per cell cycle. Binds the DnaA box (a 9 base pair repeat at the origin) and separates the double-stranded (ds)DNA. Forms a right-handed helical filament on oriC DNA; dsDNA binds to the exterior of the filament while single-stranded (ss)DNA is stabiized in the filament's interior. The ATP-DnaA-oriC complex binds and stabilizes one strand of the AT-rich DNA unwinding element (DUE), permitting loading of DNA polymerase. After initiation quickly degrades to an ADP-DnaA complex that is not apt for DNA replication. Binds acidic phospholipids. The chain is Chromosomal replication initiator protein DnaA from Vibrio campbellii (strain ATCC BAA-1116).